The primary structure comprises 141 residues: Large ribosomal subunit protein uL11 (141 aa).

It belongs to the universal ribosomal protein uL11 family. As to quaternary structure, part of the ribosomal stalk of the 50S ribosomal subunit. Interacts with L10 and the large rRNA to form the base of the stalk. L10 forms an elongated spine to which L12 dimers bind in a sequential fashion forming a multimeric L10(L12)X complex. Post-translationally, one or more lysine residues are methylated.

Its function is as follows. Forms part of the ribosomal stalk which helps the ribosome interact with GTP-bound translation factors. This Synechococcus sp. (strain WH7803) protein is Large ribosomal subunit protein uL11.